Here is a 463-residue protein sequence, read N- to C-terminus: 23S rRNA (uracil(1939)-C(5))-methyltransferase RlmD (463 aa).

A TRAM domain is found at 8–76; that stretch reads RSKSATVYTF…KRFEEGELIE (69 aa). [4Fe-4S] cluster contacts are provided by C90, C96, C99, and C178. Q288, F317, N322, E341, D368, and D389 together coordinate S-adenosyl-L-methionine. C415 serves as the catalytic Nucleophile.

It belongs to the class I-like SAM-binding methyltransferase superfamily. RNA M5U methyltransferase family. RlmD subfamily.

The catalysed reaction is uridine(1939) in 23S rRNA + S-adenosyl-L-methionine = 5-methyluridine(1939) in 23S rRNA + S-adenosyl-L-homocysteine + H(+). Catalyzes the formation of 5-methyl-uridine at position 1939 (m5U1939) in 23S rRNA. This Acinetobacter baylyi (strain ATCC 33305 / BD413 / ADP1) protein is 23S rRNA (uracil(1939)-C(5))-methyltransferase RlmD.